Here is a 165-residue protein sequence, read N- to C-terminus: uncharacterized protein (165 aa).

Helical transmembrane passes span 6-26 (ILFP…SGQA), 28-48 (LFSG…AFVY), 54-74 (AVTP…HFFA), 78-98 (WVWW…SLLV), 110-130 (AVSM…MAWL), and 138-158 (ALLK…LLLI).

Its subcellular location is the cell membrane. This is an uncharacterized protein from Bacillus subtilis (strain 168).